The primary structure comprises 299 residues: Phosphatidylserine decarboxylase proenzyme (299 aa).

Active-site charge relay system; for autoendoproteolytic cleavage activity residues include Asp115, His171, and Ser258. Ser258 serves as the catalytic Schiff-base intermediate with substrate; via pyruvic acid; for decarboxylase activity. Residue Ser258 is modified to Pyruvic acid (Ser); by autocatalysis.

It belongs to the phosphatidylserine decarboxylase family. PSD-B subfamily. Prokaryotic type II sub-subfamily. As to quaternary structure, heterodimer of a large membrane-associated beta subunit and a small pyruvoyl-containing alpha subunit. Requires pyruvate as cofactor. Post-translationally, is synthesized initially as an inactive proenzyme. Formation of the active enzyme involves a self-maturation process in which the active site pyruvoyl group is generated from an internal serine residue via an autocatalytic post-translational modification. Two non-identical subunits are generated from the proenzyme in this reaction, and the pyruvate is formed at the N-terminus of the alpha chain, which is derived from the carboxyl end of the proenzyme. The autoendoproteolytic cleavage occurs by a canonical serine protease mechanism, in which the side chain hydroxyl group of the serine supplies its oxygen atom to form the C-terminus of the beta chain, while the remainder of the serine residue undergoes an oxidative deamination to produce ammonia and the pyruvoyl prosthetic group on the alpha chain. During this reaction, the Ser that is part of the protease active site of the proenzyme becomes the pyruvoyl prosthetic group, which constitutes an essential element of the active site of the mature decarboxylase.

It localises to the cell membrane. It catalyses the reaction a 1,2-diacyl-sn-glycero-3-phospho-L-serine + H(+) = a 1,2-diacyl-sn-glycero-3-phosphoethanolamine + CO2. The protein operates within phospholipid metabolism; phosphatidylethanolamine biosynthesis; phosphatidylethanolamine from CDP-diacylglycerol: step 2/2. Catalyzes the formation of phosphatidylethanolamine (PtdEtn) from phosphatidylserine (PtdSer). The polypeptide is Phosphatidylserine decarboxylase proenzyme (Chlamydia caviae (strain ATCC VR-813 / DSM 19441 / 03DC25 / GPIC) (Chlamydophila caviae)).